Consider the following 164-residue polypeptide: Lipoprotein signal peptidase (164 aa).

The next 4 membrane-spanning stretches (helical) occupy residues 12-32 (WLWL…LILQ), 42-62 (LFPS…SFLA), 70-90 (WFFA…MYRS), and 102-122 (ALII…GFVV). Active-site residues include Asp123 and Asp141. The helical transmembrane segment at 137–157 (FNLADTAICVGAALIVLEGFL) threads the bilayer.

The protein belongs to the peptidase A8 family.

It localises to the cell inner membrane. It carries out the reaction Release of signal peptides from bacterial membrane prolipoproteins. Hydrolyzes -Xaa-Yaa-Zaa-|-(S,diacylglyceryl)Cys-, in which Xaa is hydrophobic (preferably Leu), and Yaa (Ala or Ser) and Zaa (Gly or Ala) have small, neutral side chains.. It participates in protein modification; lipoprotein biosynthesis (signal peptide cleavage). Its function is as follows. This protein specifically catalyzes the removal of signal peptides from prolipoproteins. The chain is Lipoprotein signal peptidase from Shigella flexneri serotype 5b (strain 8401).